We begin with the raw amino-acid sequence, 424 residues long: Histidine--tRNA ligase (424 aa).

The disordered stretch occupies residues 1–22 (MSYRRPKGTYDVYPGDAARQEP).

The protein belongs to the class-II aminoacyl-tRNA synthetase family. In terms of assembly, homodimer.

The protein resides in the cytoplasm. The catalysed reaction is tRNA(His) + L-histidine + ATP = L-histidyl-tRNA(His) + AMP + diphosphate + H(+). This Rubrobacter xylanophilus (strain DSM 9941 / JCM 11954 / NBRC 16129 / PRD-1) protein is Histidine--tRNA ligase.